A 251-amino-acid chain; its full sequence is 1-(5-phosphoribosyl)-5-[(5-phosphoribosylamino)methylideneamino] imidazole-4-carboxamide isomerase (251 aa).

The Proton acceptor role is filled by D8. D131 acts as the Proton donor in catalysis.

This sequence belongs to the HisA/HisF family.

The protein localises to the cytoplasm. It catalyses the reaction 1-(5-phospho-beta-D-ribosyl)-5-[(5-phospho-beta-D-ribosylamino)methylideneamino]imidazole-4-carboxamide = 5-[(5-phospho-1-deoxy-D-ribulos-1-ylimino)methylamino]-1-(5-phospho-beta-D-ribosyl)imidazole-4-carboxamide. It functions in the pathway amino-acid biosynthesis; L-histidine biosynthesis; L-histidine from 5-phospho-alpha-D-ribose 1-diphosphate: step 4/9. This is 1-(5-phosphoribosyl)-5-[(5-phosphoribosylamino)methylideneamino] imidazole-4-carboxamide isomerase from Thiobacillus denitrificans (strain ATCC 25259 / T1).